The sequence spans 356 residues: S-adenosylmethionine:tRNA ribosyltransferase-isomerase (356 aa).

Belongs to the QueA family. Monomer.

Its subcellular location is the cytoplasm. The catalysed reaction is 7-aminomethyl-7-carbaguanosine(34) in tRNA + S-adenosyl-L-methionine = epoxyqueuosine(34) in tRNA + adenine + L-methionine + 2 H(+). It functions in the pathway tRNA modification; tRNA-queuosine biosynthesis. Transfers and isomerizes the ribose moiety from AdoMet to the 7-aminomethyl group of 7-deazaguanine (preQ1-tRNA) to give epoxyqueuosine (oQ-tRNA). This Escherichia coli (strain UTI89 / UPEC) protein is S-adenosylmethionine:tRNA ribosyltransferase-isomerase.